Consider the following 264-residue polypeptide: Thymidylate synthase (264 aa).

DUMP is bound at residue arginine 21. Position 51 (histidine 51) interacts with (6R)-5,10-methylene-5,6,7,8-tetrahydrofolate. 126–127 (RR) lines the dUMP pocket. Residue cysteine 146 is the Nucleophile of the active site. DUMP is bound by residues 166–169 (RSAD), asparagine 177, and 207–209 (HLY). Residue aspartate 169 coordinates (6R)-5,10-methylene-5,6,7,8-tetrahydrofolate. A (6R)-5,10-methylene-5,6,7,8-tetrahydrofolate-binding site is contributed by serine 263.

Belongs to the thymidylate synthase family. Bacterial-type ThyA subfamily. In terms of assembly, homodimer.

It is found in the cytoplasm. The enzyme catalyses dUMP + (6R)-5,10-methylene-5,6,7,8-tetrahydrofolate = 7,8-dihydrofolate + dTMP. Its pathway is pyrimidine metabolism; dTTP biosynthesis. Catalyzes the reductive methylation of 2'-deoxyuridine-5'-monophosphate (dUMP) to 2'-deoxythymidine-5'-monophosphate (dTMP) while utilizing 5,10-methylenetetrahydrofolate (mTHF) as the methyl donor and reductant in the reaction, yielding dihydrofolate (DHF) as a by-product. This enzymatic reaction provides an intracellular de novo source of dTMP, an essential precursor for DNA biosynthesis. The chain is Thymidylate synthase from Laribacter hongkongensis (strain HLHK9).